We begin with the raw amino-acid sequence, 273 residues long: Shikimate dehydrogenase (NADP(+)) (273 aa).

Shikimate contacts are provided by residues 18–20 and T65; that span reads SKS. K69 functions as the Proton acceptor in the catalytic mechanism. An NADP(+)-binding site is contributed by E81. Residues N90 and D105 each contribute to the shikimate site. NADP(+)-binding positions include 130-134, 154-159, and M217; these read GAGGA and NRTHSK. Y219 is a binding site for shikimate. Residue G240 coordinates NADP(+).

It belongs to the shikimate dehydrogenase family. As to quaternary structure, homodimer.

It carries out the reaction shikimate + NADP(+) = 3-dehydroshikimate + NADPH + H(+). The protein operates within metabolic intermediate biosynthesis; chorismate biosynthesis; chorismate from D-erythrose 4-phosphate and phosphoenolpyruvate: step 4/7. Functionally, involved in the biosynthesis of the chorismate, which leads to the biosynthesis of aromatic amino acids. Catalyzes the reversible NADPH linked reduction of 3-dehydroshikimate (DHSA) to yield shikimate (SA). The chain is Shikimate dehydrogenase (NADP(+)) from Herminiimonas arsenicoxydans.